The primary structure comprises 136 residues: 5-hydroxyisourate hydrolase (136 aa).

An N-terminal signal peptide occupies residues 1-20; the sequence is MKRYILATVIASLVAAPAMA. His31, Arg69, and Tyr133 together coordinate substrate.

It belongs to the transthyretin family. 5-hydroxyisourate hydrolase subfamily. As to quaternary structure, homotetramer.

The protein resides in the periplasm. The enzyme catalyses 5-hydroxyisourate + H2O = 5-hydroxy-2-oxo-4-ureido-2,5-dihydro-1H-imidazole-5-carboxylate + H(+). Catalyzes the hydrolysis of 5-hydroxyisourate (HIU) to 2-oxo-4-hydroxy-4-carboxy-5-ureidoimidazoline (OHCU). This Salmonella typhimurium (strain LT2 / SGSC1412 / ATCC 700720) protein is 5-hydroxyisourate hydrolase (hiuH).